The sequence spans 114 residues: Cell cycle protein GpsB (114 aa).

Residues 42–77 (YQKMADMNNEVVKLSEENHKLKKELEELRLRVATSR) adopt a coiled-coil conformation. The disordered stretch occupies residues 74–99 (ATSRPQDNKSFSSNNTTTNTSSNNVD). The span at 85–97 (SSNNTTTNTSSNN) shows a compositional bias: low complexity.

This sequence belongs to the GpsB family. As to quaternary structure, forms polymers through the coiled coil domains. Interacts with PBP1, MreC and EzrA.

Its subcellular location is the cytoplasm. In terms of biological role, divisome component that associates with the complex late in its assembly, after the Z-ring is formed, and is dependent on DivIC and PBP2B for its recruitment to the divisome. Together with EzrA, is a key component of the system that regulates PBP1 localization during cell cycle progression. Its main role could be the removal of PBP1 from the cell pole after pole maturation is completed. Also contributes to the recruitment of PBP1 to the division complex. Not essential for septum formation. This is Cell cycle protein GpsB from Staphylococcus aureus (strain Mu3 / ATCC 700698).